The chain runs to 119 residues: Mitochondrial coiled-coil domain protein 1 (119 aa).

Residues 1 to 24 (MVLPLPWLSRYHFLRLLLPSWSLA) constitute a mitochondrion transit peptide. The interval 25–65 (PQGSHGCCSQNPKASMEEQTSSRGNGKMTSPPRGPGTHRTA) is disordered. Over residues 31-52 (CCSQNPKASMEEQTSSRGNGKM) the composition is skewed to polar residues. A coiled-coil region spans residues 62–116 (HRTAELARAEELLEQQLELYQALLEGQEGAWEAQALVLKIQKLKEQMRRHQESLG).

In terms of tissue distribution, widely expressed. Expressed in adult and fetal liver, kidney and lung. Expressed in fetal brain. Weakly expressed in fetal spleen.

The protein resides in the mitochondrion. The protein is Mitochondrial coiled-coil domain protein 1 (MCCD1) of Homo sapiens (Human).